The primary structure comprises 427 residues: Enolase (427 aa).

Position 163 (glutamine 163) interacts with (2R)-2-phosphoglycerate. The Proton donor role is filled by glutamate 205. The Mg(2+) site is built by aspartate 242, glutamate 285, and aspartate 312. Positions 337, 366, 367, and 388 each coordinate (2R)-2-phosphoglycerate. Lysine 337 serves as the catalytic Proton acceptor.

It belongs to the enolase family. Mg(2+) serves as cofactor.

The protein resides in the cytoplasm. Its subcellular location is the secreted. It is found in the cell surface. It catalyses the reaction (2R)-2-phosphoglycerate = phosphoenolpyruvate + H2O. Its pathway is carbohydrate degradation; glycolysis; pyruvate from D-glyceraldehyde 3-phosphate: step 4/5. Catalyzes the reversible conversion of 2-phosphoglycerate (2-PG) into phosphoenolpyruvate (PEP). It is essential for the degradation of carbohydrates via glycolysis. In Dechloromonas aromatica (strain RCB), this protein is Enolase.